We begin with the raw amino-acid sequence, 177 residues long: Putative pre-16S rRNA nuclease (177 aa).

Belongs to the YqgF nuclease family.

The protein localises to the cytoplasm. Functionally, could be a nuclease involved in processing of the 5'-end of pre-16S rRNA. The protein is Putative pre-16S rRNA nuclease of Psychrobacter arcticus (strain DSM 17307 / VKM B-2377 / 273-4).